The sequence spans 732 residues: Catalase-peroxidase (732 aa).

Residues 1–15 (MSTESKCPFAGGAYA) form the signal peptide. Residues 96-219 (WHSAGTYRIY…LGAVQMGLIY (124 aa)) constitute a cross-link (tryptophyl-tyrosyl-methioninium (Trp-Tyr) (with M-245)). Residue histidine 97 is the Proton acceptor of the active site. The segment at residues 219–245 (YVNPEGPNGNPDPLASARDIRETFARM) is a cross-link (tryptophyl-tyrosyl-methioninium (Tyr-Met) (with W-96)). A heme b-binding site is contributed by histidine 260.

The protein belongs to the peroxidase family. Peroxidase/catalase subfamily. As to quaternary structure, homodimer or homotetramer. Requires heme b as cofactor. Formation of the three residue Trp-Tyr-Met cross-link is important for the catalase, but not the peroxidase activity of the enzyme.

The enzyme catalyses H2O2 + AH2 = A + 2 H2O. It catalyses the reaction 2 H2O2 = O2 + 2 H2O. In terms of biological role, bifunctional enzyme with both catalase and broad-spectrum peroxidase activity. The chain is Catalase-peroxidase from Acidobacterium capsulatum (strain ATCC 51196 / DSM 11244 / BCRC 80197 / JCM 7670 / NBRC 15755 / NCIMB 13165 / 161).